A 603-amino-acid chain; its full sequence is Palladin (603 aa).

The segment at 63–67 (FPPPP) is interaction with VASP. Residue serine 133 is modified to Phosphoserine. The interval 134 to 156 (PPTPAALLSPTKEPPPLLAKPKL) is disordered. Residue threonine 136 is modified to Phosphothreonine. 4 positions are modified to phosphoserine: serine 142, serine 170, serine 256, and serine 261. The region spanning 278-362 (PFFEMKLKHY…MAANTQGRVS (85 aa)) is the Ig-like C2-type 1 domain. The interval 373–402 (NQRGRSPRSPPGHPHARRPRSRSRDSGDEN) is disordered. Serine 378, serine 381, and serine 393 each carry phosphoserine. The residue at position 395 (serine 395) is a Phosphoserine; by PKB/AKT1. Serine 398 carries the post-translational modification Phosphoserine. 2 Ig-like C2-type domains span residues 412 to 503 (PHFL…LVVA) and 511 to 601 (PVFI…ARLD). Interaction with EZR stretches follow at residues 414–503 (FLQA…LVVA) and 513–603 (FIEK…LDVY). An intrachain disulfide couples cysteine 433 to cysteine 485.

It belongs to the myotilin/palladin family. Interacts with EPS8. Interacts with LASP1. Interacts with VASP. Interacts with ACTN. Interacts with SORBS2. Interacts with PFN1. Interacts with LPP. Interacts with SPIN90. Interacts with SRC. Interacts with EZR. Interacts with RAI14. Phosphorylated predominantly on serines and, to a lesser extent, on tyrosines. Phosphorylation at Ser-395 by PKB/AKT1 modulates cytoskeletal organization and cell motility. In adult central nervous system is detected in the brain and spinal cord, specially in the olfactory bulb, cerebral and cerebellar cortices, hippocampus, amygdala, superior colluculus, and superficial laminae of the spinal dorsal horn.

It localises to the cytoplasm. It is found in the cytoskeleton. The protein resides in the cell junction. The protein localises to the focal adhesion. Its subcellular location is the myofibril. It localises to the sarcomere. It is found in the z line. The protein resides in the cell projection. The protein localises to the ruffle. Its subcellular location is the podosome. It localises to the lamellipodium. It is found in the axon. The protein resides in the growth cone. Its function is as follows. Cytoskeletal protein required for organization of normal actin cytoskeleton. Roles in establishing cell morphology, motility, cell adhesion and cell-extracellular matrix interactions in a variety of cell types. May function as a scaffolding molecule with the potential to influence both actin polymerization and the assembly of existing actin filaments into higher-order arrays. Binds to proteins that bind to either monomeric or filamentous actin. Localizes at sites where active actin remodeling takes place, such as lamellipodia and membrane ruffles. Different isoforms may have functional differences. Plays a role in neurite outgrowth and in the establishment of polarity during neuronal morphogenesis. Participates in the acquisition of the reactive astrocyte morphology. This Rattus norvegicus (Rat) protein is Palladin (Palld).